The following is a 137-amino-acid chain: Large ribosomal subunit protein uL16 (137 aa).

This sequence belongs to the universal ribosomal protein uL16 family. As to quaternary structure, part of the 50S ribosomal subunit.

In terms of biological role, binds 23S rRNA and is also seen to make contacts with the A and possibly P site tRNAs. The protein is Large ribosomal subunit protein uL16 of Cellvibrio japonicus (strain Ueda107) (Pseudomonas fluorescens subsp. cellulosa).